The primary structure comprises 132 residues: Transcription antitermination protein NusB (132 aa).

Belongs to the NusB family.

Involved in transcription antitermination. Required for transcription of ribosomal RNA (rRNA) genes. Binds specifically to the boxA antiterminator sequence of the ribosomal RNA (rrn) operons. The chain is Transcription antitermination protein NusB from Lachnoclostridium phytofermentans (strain ATCC 700394 / DSM 18823 / ISDg) (Clostridium phytofermentans).